A 290-amino-acid polypeptide reads, in one-letter code: D-tagatose 3-epimerase (290 aa).

Cys66 provides a ligand contact to substrate. The active-site Proton donor/acceptor is the Glu152. Glu152 is a binding site for Mn(2+). Residues Glu158 and 185-188 (DTFH) each bind substrate. Positions 185 and 211 each coordinate Mn(2+). Arg217 serves as a coordination point for substrate. The active-site Proton donor/acceptor is the Glu246. Glu246 lines the Mn(2+) pocket.

The protein belongs to the hyi family. Homodimer. Requires Mn(2+) as cofactor.

It carries out the reaction keto-D-tagatose = keto-D-sorbose. The enzyme catalyses D-allulose = keto-D-fructose. It catalyses the reaction D-ribulose = D-xylulose. Strongly inhibited (about 90% of the enzyme activity) by Ag(+), Hg(2+) and p-chloromercuribenzoic acid. Cu(2+) and Zn(2+) inhibit about 60% of the enzyme activity. In terms of biological role, catalyzes the epimerization of various ketoses at the C(3) position. It is able to interconvert D-tagatose and D-ribulose to D-sorbose and D-xylulose, respectively. The enzyme is also able to accept other ketopentoses such as D-psicose with lower efficiency. The protein is D-tagatose 3-epimerase of Pseudomonas cichorii.